A 173-amino-acid chain; its full sequence is MAIVLGIDPGSRVTGYGVIRQQGRQLTYLGSGCIRTVVDDMPTRLKLIYAGVTEIITQFQPDFFAIEQVFMAKNPDSALKLGQARGAAIVAAVNLNLPVSEYAARQVKQTVVGTGAAEKSQVQHMVRSLLQLPANPQADAADALAIAITHCHLSQNTLRLGNDQMVLARGRLR.

Active-site residues include Asp-8, Glu-67, and Asp-139. Residues Asp-8, Glu-67, and Asp-139 each contribute to the Mg(2+) site.

Belongs to the RuvC family. Homodimer which binds Holliday junction (HJ) DNA. The HJ becomes 2-fold symmetrical on binding to RuvC with unstacked arms; it has a different conformation from HJ DNA in complex with RuvA. In the full resolvosome a probable DNA-RuvA(4)-RuvB(12)-RuvC(2) complex forms which resolves the HJ. Mg(2+) serves as cofactor.

It is found in the cytoplasm. The catalysed reaction is Endonucleolytic cleavage at a junction such as a reciprocal single-stranded crossover between two homologous DNA duplexes (Holliday junction).. Its function is as follows. The RuvA-RuvB-RuvC complex processes Holliday junction (HJ) DNA during genetic recombination and DNA repair. Endonuclease that resolves HJ intermediates. Cleaves cruciform DNA by making single-stranded nicks across the HJ at symmetrical positions within the homologous arms, yielding a 5'-phosphate and a 3'-hydroxyl group; requires a central core of homology in the junction. The consensus cleavage sequence is 5'-(A/T)TT(C/G)-3'. Cleavage occurs on the 3'-side of the TT dinucleotide at the point of strand exchange. HJ branch migration catalyzed by RuvA-RuvB allows RuvC to scan DNA until it finds its consensus sequence, where it cleaves and resolves the cruciform DNA. This chain is Crossover junction endodeoxyribonuclease RuvC, found in Yersinia enterocolitica serotype O:8 / biotype 1B (strain NCTC 13174 / 8081).